Here is a 129-residue protein sequence, read N- to C-terminus: Profilin-4 (129 aa).

This sequence belongs to the profilin family. As to expression, expressed in testis, in seminiferous tubules (at protein level). Expressed in spermatocytes and spermatids, but not in spermatogonium.

It localises to the cytoplasm. Functionally, involved in male fertility. Required for manchette development and acrosome biogenesis during spermiogenesis. Binds in vitro to phospholipids, including phosphatidylinositol 3-phosphate (PtdIns(3)P), phosphatidylinositol 4,5-bisphosphate (PtdIns(4,5)P2), phosphatidylinositol 4-phosphate (PtdIns(4)P) and phosphatidic acid (PA). Contrary to other profilin family members, does not bind to actin in vitro. In Rattus norvegicus (Rat), this protein is Profilin-4 (Pfn4).